A 279-amino-acid polypeptide reads, in one-letter code: Putative pyruvate, phosphate dikinase regulatory protein (279 aa).

153–160 provides a ligand contact to ADP; that stretch reads GVSRTSKT.

The protein belongs to the pyruvate, phosphate/water dikinase regulatory protein family. PDRP subfamily.

The catalysed reaction is N(tele)-phospho-L-histidyl/L-threonyl-[pyruvate, phosphate dikinase] + ADP = N(tele)-phospho-L-histidyl/O-phospho-L-threonyl-[pyruvate, phosphate dikinase] + AMP + H(+). It carries out the reaction N(tele)-phospho-L-histidyl/O-phospho-L-threonyl-[pyruvate, phosphate dikinase] + phosphate + H(+) = N(tele)-phospho-L-histidyl/L-threonyl-[pyruvate, phosphate dikinase] + diphosphate. Bifunctional serine/threonine kinase and phosphorylase involved in the regulation of the pyruvate, phosphate dikinase (PPDK) by catalyzing its phosphorylation/dephosphorylation. The polypeptide is Putative pyruvate, phosphate dikinase regulatory protein (Rhodopseudomonas palustris (strain HaA2)).